Here is a 207-residue protein sequence, read N- to C-terminus: Ribosomal RNA large subunit methyltransferase E (207 aa).

S-adenosyl-L-methionine contacts are provided by glycine 49, tryptophan 51, aspartate 69, aspartate 87, and aspartate 111. Lysine 151 (proton acceptor) is an active-site residue.

It belongs to the class I-like SAM-binding methyltransferase superfamily. RNA methyltransferase RlmE family.

The protein localises to the cytoplasm. It carries out the reaction uridine(2552) in 23S rRNA + S-adenosyl-L-methionine = 2'-O-methyluridine(2552) in 23S rRNA + S-adenosyl-L-homocysteine + H(+). Its function is as follows. Specifically methylates the uridine in position 2552 of 23S rRNA at the 2'-O position of the ribose in the fully assembled 50S ribosomal subunit. The polypeptide is Ribosomal RNA large subunit methyltransferase E (Oleidesulfovibrio alaskensis (strain ATCC BAA-1058 / DSM 17464 / G20) (Desulfovibrio alaskensis)).